We begin with the raw amino-acid sequence, 35 residues long: Thionin NsW2 (35 aa).

Disulfide bonds link C4/C32, C12/C30, and C16/C26.

In terms of processing, contains 4 disulfide bonds.

It is found in the secreted. Its function is as follows. Antimicrobial peptide disrupting membranes. Has antibacterial against Gram-positive bacteria S.aureus (MIC=6.5 uM) and B.subtilis (MIC=3.25 uM) but not against Gram-negative bacterium E.coli. Has antifungal activity against C.albicans (MIC=3.25 uM). The chain is Thionin NsW2 from Nigella sativa (Black cumin).